The primary structure comprises 154 residues: Myoglobin (154 aa).

One can recognise a Globin domain in the interval 2 to 148 (GLSDGEWQLV…FRNDIAAKYK (147 aa)). Residue Ser4 is modified to Phosphoserine. His65 is a nitrite binding site. Residue His65 participates in O2 binding. Thr68 carries the phosphothreonine modification. Position 94 (His94) interacts with heme b.

The protein belongs to the globin family. Monomeric.

It is found in the cytoplasm. Its subcellular location is the sarcoplasm. It carries out the reaction Fe(III)-heme b-[protein] + nitric oxide + H2O = Fe(II)-heme b-[protein] + nitrite + 2 H(+). The catalysed reaction is H2O2 + AH2 = A + 2 H2O. Its function is as follows. Monomeric heme protein which primary function is to store oxygen and facilitate its diffusion within muscle tissues. Reversibly binds oxygen through a pentacoordinated heme iron and enables its timely and efficient release as needed during periods of heightened demand. Depending on the oxidative conditions of tissues and cells, and in addition to its ability to bind oxygen, it also has a nitrite reductase activity whereby it regulates the production of bioactive nitric oxide. Under stress conditions, like hypoxia and anoxia, it also protects cells against reactive oxygen species thanks to its pseudoperoxidase activity. The chain is Myoglobin (MB) from Erinaceus europaeus (Western European hedgehog).